Reading from the N-terminus, the 446-residue chain is MTEKILEKFDALEEKERILEAIRENNTDRHHRQRKKPLITPLLFDLHVQFGDTITPSASKIIKNKPHDLKNPKRSVSFKYKPNNSRSDLEESDLRPPILGTMINYEESKLMDHKEENLKSRPISLRYLKDKDETEYANPLPFPQLWSKHLCKKSAESSVPTPKLTNESNASKKENVSPPFTDQHESRTKKSMHSTDHSADSSTSRGKCPPKGITKESELTRNDEARKPHPVKQSIMLPLDCEDLLKNPKIKTIDLRPAVTVHTSMKQSHANPIIFYDTEYVQMLFLTKRFTPYAMKCTERNIVLEKNYEVLKVLFSDEPSAVSEPIQQKHLQVFSAEYAQKSINEKRKKKHDRLVSKKISPNTRYNLSQTFSSLSKKFVGYFDKDVTQGKSYKANRFERFSKTKPPPTRKLTTLPIKYDSKPLKNIFEIHKLNNMTPLDNLLGLRA.

Disordered regions lie at residues Lys63–Arg95 and Ala155–Lys232. The segment covering Glu156–Asn169 has biased composition (polar residues). Basic and acidic residues-rich tracts occupy residues Asp182–Ala199 and Ile213–Lys227.

This is an uncharacterized protein from Mus musculus (Mouse).